A 313-amino-acid chain; its full sequence is Mas-related G-protein coupled receptor member A4 (313 aa).

The Extracellular segment spans residues 1–25 (MAPTTTNPMNETIPGSIDIETLIPN). Asn-10 carries an N-linked (GlcNAc...) asparagine glycan. The helical transmembrane segment at 26–46 (LMIIIFGLVGLTGNVILFWLL) threads the bilayer. Over 47–54 (GFHLHRNA) the chain is Cytoplasmic. Residues 55 to 75 (FLVYILNLALADFLFLLCHII) traverse the membrane as a helical segment. The N-linked (GlcNAc...) asparagine glycan is linked to Asn-76. Residues 76–93 (NSTMLLLKVHLPNNILNH) lie on the Extracellular side of the membrane. A helical transmembrane segment spans residues 94-114 (CFDIIMTVLYITGLSMLSAIS). The Cytoplasmic segment spans residues 115–137 (TERCLSVLCPIWYRCRRPEHTST). Residues 138 to 158 (VLCAVIWFLPLLICILNGYFC) form a helical membrane-spanning segment. The Extracellular portion of the chain corresponds to 159 to 182 (HFFGPKYVIDSVCLATNFFIRTYP). A helical transmembrane segment spans residues 183 to 203 (MFLFIVLCLSTLALLARLFCG). At 204–219 (AGKTKFTRLFVTIMLT) the chain is on the cytoplasmic side. The helical transmembrane segment at 220–240 (VLVFLLCGLPLGFFWFLVPWI) threads the bilayer. Over 241-255 (NRDFSVLDYILFQTS) the chain is Extracellular. A helical membrane pass occupies residues 256 to 276 (LVLTSVNSCANPIIYFFVGSF). Residues 277–313 (RHRLKHKTLKMVLQSALQDTPETPENMVEMSRSKAEP) lie on the Cytoplasmic side of the membrane.

Belongs to the G-protein coupled receptor 1 family. Mas subfamily. Expressed in a subset of sensory neurons that includes nociceptors. Expressed in the subclass of non-peptidergic sensory neurons that are IB4(+) and VR1(-).

Its subcellular location is the cell membrane. In terms of biological role, orphan receptor. May be a receptor for RFamide-family neuropeptides such as NPFF and NPAF, which are analgesic in vivo. May regulate nociceptor function and/or development, including the sensation or modulation of pain. In Mus musculus (Mouse), this protein is Mas-related G-protein coupled receptor member A4 (Mrgpra4).